A 142-amino-acid chain; its full sequence is Hemoglobin subunit alpha-A (142 aa).

In terms of domain architecture, Globin spans 2–142 (VLSGSDKTNV…VGNVLTAKYR (141 aa)). H59 contacts O2. H88 contributes to the heme b binding site.

The protein belongs to the globin family. Heterotetramer of two alpha chains and two beta chains. In terms of tissue distribution, red blood cells.

Involved in oxygen transport from the lung to the various peripheral tissues. This is Hemoglobin subunit alpha-A (HBAA) from Ara ararauna (Blue-and-yellow macaw).